Reading from the N-terminus, the 432-residue chain is Adenylosuccinate synthetase (432 aa).

GTP-binding positions include 13 to 19 (GDEGKGK) and 41 to 43 (GHT). Catalysis depends on Asp-14, which acts as the Proton acceptor. 2 residues coordinate Mg(2+): Asp-14 and Gly-41. Residues 14–17 (DEGK), 39–42 (NAGH), Thr-130, Arg-144, Gln-225, Thr-240, and Arg-304 each bind IMP. The active-site Proton donor is His-42. 300-306 (AVTGRPR) is a binding site for substrate. Residues Arg-306, 332 to 334 (KLD), and 415 to 417 (STG) each bind GTP.

This sequence belongs to the adenylosuccinate synthetase family. In terms of assembly, homodimer. The cofactor is Mg(2+).

The protein resides in the cytoplasm. It catalyses the reaction IMP + L-aspartate + GTP = N(6)-(1,2-dicarboxyethyl)-AMP + GDP + phosphate + 2 H(+). Its pathway is purine metabolism; AMP biosynthesis via de novo pathway; AMP from IMP: step 1/2. Its function is as follows. Plays an important role in the de novo pathway of purine nucleotide biosynthesis. Catalyzes the first committed step in the biosynthesis of AMP from IMP. This Haemophilus influenzae (strain PittEE) protein is Adenylosuccinate synthetase.